We begin with the raw amino-acid sequence, 339 residues long: Phosphate acyltransferase (339 aa).

This sequence belongs to the PlsX family. Homodimer. Probably interacts with PlsY.

It localises to the cytoplasm. It catalyses the reaction a fatty acyl-[ACP] + phosphate = an acyl phosphate + holo-[ACP]. It functions in the pathway lipid metabolism; phospholipid metabolism. Its function is as follows. Catalyzes the reversible formation of acyl-phosphate (acyl-PO(4)) from acyl-[acyl-carrier-protein] (acyl-ACP). This enzyme utilizes acyl-ACP as fatty acyl donor, but not acyl-CoA. This Helicobacter pylori (strain Shi470) protein is Phosphate acyltransferase.